A 469-amino-acid chain; its full sequence is MTEHYDVVVLGAGPGGYVSAIRAAQLGKKVAVIEKQYWGGVCLNVGCIPSKSLIKNAEVAHTFTHEKKTFGINGEVTFNYEDAHKRSRGVSDKIVGGVHYLMKKNKIIEIHGLGNFKDAKTLEVTDGKDAGKTITFDDCIIATGSVVNTLRGVDFSENVVSFEEQILNPVAPKKMVIVGAGAIGMEFAYVLGNYGVDVTVIEFMDRVLPNEDAEVSKVIAKAYKKMGVKLLPGHATTAVRDNGDFVEVDYQKKGSDKTETLTVDRVMVSVGFRPRVEGFGLENTGVKLTERGAIEIDDYMRTNVDGIYAIGDVTAKLQLAHVAEAQGIVAAETIAGAETQTLGDYMMMPRATFCNPQVSSFGYTEEQAKEKWPDREIKVASFPFSANGKAVGLAETDGFAKIVADAEFGELLGAHLVGANASELINELVLAQNWDLTTEEISRSVHIHPTLSEAVKEAAHGISGHMINF.

Residues 34-42 (EKQYWGGVC), Lys51, and Gly114 contribute to the FAD site. Residues Cys42 and Cys47 are joined by a disulfide bond. NAD(+) contacts are provided by residues 179–183 (GAGAI), Glu202, and 269–272 (SVGF). Asp312 and Ala320 together coordinate FAD. The Proton acceptor role is filled by His448.

The protein belongs to the class-I pyridine nucleotide-disulfide oxidoreductase family. Homodimer. Part of an unusual ODH/PDH supercomplex, consisting of AceE (E1), AceF (E2), and Lpd (E3) together with OdhA (E1+E2). FAD is required as a cofactor.

Its subcellular location is the cytoplasm. It carries out the reaction N(6)-[(R)-dihydrolipoyl]-L-lysyl-[protein] + NAD(+) = N(6)-[(R)-lipoyl]-L-lysyl-[protein] + NADH + H(+). The protein operates within carbohydrate metabolism; tricarboxylic acid cycle; succinyl-CoA from 2-oxoglutarate (dehydrogenase route): step 1/1. Its function is as follows. Lipoamide dehydrogenase is an essential component of the pyruvate dehydrogenase (PDH) and 2-oxoglutarate dehydrogenase (ODH) complexes. Catalyzes the reoxidation of dihydrolipoyl groups which are covalently attached to the lipoate acyltransferase components (E2) of the complexes. Also catalyzes a reversible NADH:NAD(+) transhydrogenation, and is able to transfer electrons from NADH to various redox-active compounds and quinones. May be involved in quinone redox cycling in C.glutamicum. The protein is Dihydrolipoyl dehydrogenase (lpd) of Corynebacterium glutamicum (strain ATCC 13032 / DSM 20300 / JCM 1318 / BCRC 11384 / CCUG 27702 / LMG 3730 / NBRC 12168 / NCIMB 10025 / NRRL B-2784 / 534).